A 515-amino-acid polypeptide reads, in one-letter code: 1-pyrroline-5-carboxylate dehydrogenase (515 aa).

Catalysis depends on residues glutamate 286 and cysteine 320.

This sequence belongs to the aldehyde dehydrogenase family. RocA subfamily.

The enzyme catalyses L-glutamate 5-semialdehyde + NAD(+) + H2O = L-glutamate + NADH + 2 H(+). It functions in the pathway amino-acid degradation; L-proline degradation into L-glutamate; L-glutamate from L-proline: step 2/2. The protein is 1-pyrroline-5-carboxylate dehydrogenase of Bacillus anthracis (strain A0248).